The sequence spans 356 residues: Probable butyrate kinase (356 aa).

It belongs to the acetokinase family.

The protein localises to the cytoplasm. It catalyses the reaction butanoate + ATP = butanoyl phosphate + ADP. This Clostridium perfringens (strain SM101 / Type A) protein is Probable butyrate kinase.